A 224-amino-acid chain; its full sequence is 7-cyano-7-deazaguanine synthase (224 aa).

Residue 8-18 (CSGGLDSTVAA) participates in ATP binding. Zn(2+)-binding residues include C190, C198, C201, and C204.

Belongs to the QueC family. It depends on Zn(2+) as a cofactor.

The catalysed reaction is 7-carboxy-7-deazaguanine + NH4(+) + ATP = 7-cyano-7-deazaguanine + ADP + phosphate + H2O + H(+). The protein operates within purine metabolism; 7-cyano-7-deazaguanine biosynthesis. Its function is as follows. Catalyzes the ATP-dependent conversion of 7-carboxy-7-deazaguanine (CDG) to 7-cyano-7-deazaguanine (preQ(0)). The chain is 7-cyano-7-deazaguanine synthase from Methanothrix thermoacetophila (strain DSM 6194 / JCM 14653 / NBRC 101360 / PT) (Methanosaeta thermophila).